Here is a 113-residue protein sequence, read N- to C-terminus: Large ribosomal subunit protein eL31 (113 aa).

Belongs to the eukaryotic ribosomal protein eL31 family. In terms of assembly, component of the large ribosomal subunit (LSU). Mature yeast ribosomes consist of a small (40S) and a large (60S) subunit. The 40S small subunit contains 1 molecule of ribosomal RNA (18S rRNA) and at least 33 different proteins. The large 60S subunit contains 3 rRNA molecules (25S, 5.8S and 5S rRNA) and at least 46 different proteins.

It localises to the cytoplasm. In terms of biological role, component of the ribosome, a large ribonucleoprotein complex responsible for the synthesis of proteins in the cell. The small ribosomal subunit (SSU) binds messenger RNAs (mRNAs) and translates the encoded message by selecting cognate aminoacyl-transfer RNA (tRNA) molecules. The large subunit (LSU) contains the ribosomal catalytic site termed the peptidyl transferase center (PTC), which catalyzes the formation of peptide bonds, thereby polymerizing the amino acids delivered by tRNAs into a polypeptide chain. The nascent polypeptides leave the ribosome through a tunnel in the LSU and interact with protein factors that function in enzymatic processing, targeting, and the membrane insertion of nascent chains at the exit of the ribosomal tunnel. The protein is Large ribosomal subunit protein eL31 (rpl31) of Schizosaccharomyces pombe (strain 972 / ATCC 24843) (Fission yeast).